The chain runs to 551 residues: Scaffold protein OPG125 (551 aa).

It belongs to the orthopoxvirus protein OPG125 family. In terms of assembly, interacts with the late transcription elongation factor VLTF-4/OPG110. Interacts with the late transcription factors VLTF-1.

It localises to the membrane. In terms of biological role, acts with RNA polymerase to initiate transcription from late gene promoters. This Monkeypox virus protein is Scaffold protein OPG125 (OPG125).